The following is a 1305-amino-acid chain: Cyclin-G-associated kinase (1305 aa).

Ser-2 carries the N-acetylserine modification. Phosphoserine is present on residues Ser-2 and Ser-16. The region spanning 40-315 (LRVRRVLAEG…IAEVVRQLQE (276 aa)) is the Protein kinase domain. Asp-173 serves as the catalytic Proton acceptor. A disordered region spans residues 332-354 (LEQNGGYGNSGPSRAQPPSGGPV). In terms of domain architecture, Phosphatase tensin-type spans 397-564 (SVANYAKGDL…EYVCDMVAEE (168 aa)). At Ser-454 the chain carries Phosphoserine. The C2 tensin-type domain maps to 570–708 (SKPMLVKSVV…FQVNLEVEVE (139 aa)). The interval 747–856 (FGKPELPRQP…TPRLAAGTRQ (110 aa)) is disordered. Position 768 is a phosphoserine (Ser-768). The residue at position 774 (Thr-774) is a Phosphothreonine. The segment covering 776-789 (SDSPQSSSTDTNHF) has biased composition (polar residues). Residue Ser-781 is modified to Phosphoserine. The residue at position 792 (Thr-792) is a Phosphothreonine. Over residues 805–817 (VDNTSPKESQSNL) the composition is skewed to polar residues. Ser-809, Ser-824, and Ser-827 each carry phosphoserine. Acidic residues predominate over residues 822–832 (DGSEVSDEEEA). Basic and acidic residues predominate over residues 836–848 (SEERKPGAGEDTP). Ser-938 carries the phosphoserine modification. The tract at residues 1044 to 1141 (LPGPASMPVP…PQAKPAPRAS (98 aa)) is disordered. The segment covering 1105 to 1131 (VGTSATTHKSNSSWQTTRPTAPGTSWP) has biased composition (polar residues). An Omega-N-methylarginine modification is found at Arg-1122. The residue at position 1171 (Ser-1171) is a Phosphoserine. In terms of domain architecture, J spans 1241–1305 (SRWTPVSMAD…FENQGSRPLF (65 aa)).

This sequence belongs to the protein kinase superfamily. Ser/Thr protein kinase family.

It localises to the cytoplasm. Its subcellular location is the perinuclear region. The protein localises to the golgi apparatus. The protein resides in the trans-Golgi network. It is found in the cell junction. It localises to the focal adhesion. Its subcellular location is the cytoplasmic vesicle. The protein localises to the clathrin-coated vesicle. It catalyses the reaction L-seryl-[protein] + ATP = O-phospho-L-seryl-[protein] + ADP + H(+). It carries out the reaction L-threonyl-[protein] + ATP = O-phospho-L-threonyl-[protein] + ADP + H(+). Associates with cyclin G and CDK5. Seems to act as an auxilin homolog that is involved in the uncoating of clathrin-coated vesicles by Hsc70 in non-neuronal cells. Expression oscillates slightly during the cell cycle, peaking at G1. May play a role in clathrin-mediated endocytosis and intracellular trafficking, and in the dynamics of clathrin assembly/disassembly. In Rattus norvegicus (Rat), this protein is Cyclin-G-associated kinase.